The sequence spans 373 residues: Probable pectin lyase C (373 aa).

Residues 1–17 form the signal peptide; the sequence is MKKYLLSLLAAVTYTTA. Intrachain disulfides connect C78–C95 and C87–C215. N140 and N229 each carry an N-linked (GlcNAc...) asparagine glycan. Residue R245 is part of the active site. C315 and C323 are disulfide-bonded.

This sequence belongs to the polysaccharide lyase 1 family.

The protein resides in the secreted. The enzyme catalyses Eliminative cleavage of (1-&gt;4)-alpha-D-galacturonan methyl ester to give oligosaccharides with 4-deoxy-6-O-methyl-alpha-D-galact-4-enuronosyl groups at their non-reducing ends.. In terms of biological role, pectinolytic enzymes consist of four classes of enzymes: pectin lyase, polygalacturonase, pectin methylesterase and rhamnogalacturonase. Among pectinolytic enzymes, pectin lyase is the most important in depolymerization of pectin, since it cleaves internal glycosidic bonds of highly methylated pectins. The chain is Probable pectin lyase C (pelC) from Emericella nidulans (strain FGSC A4 / ATCC 38163 / CBS 112.46 / NRRL 194 / M139) (Aspergillus nidulans).